Here is an 832-residue protein sequence, read N- to C-terminus: Histone acetyltransferase KAT2B (832 aa).

The span at 1–22 shows a compositional bias: gly residues; that stretch reads MSEAGGAGPGGCGAGAGAGAGP. 2 disordered regions span residues 1–54 and 395–436; these read MSEA…ACGP and SYNS…DSHV. The segment covering 24–39 has biased composition (pro residues); it reads ALPPQPAALPPAPPQG. A compositionally biased stretch (low complexity) spans 40 to 54; sequence SPCAAAAGGSGACGP. The segment covering 395-413 has biased composition (polar residues); the sequence is SYNSTSSSLEQPNAGSSSP. Residues 425 to 436 are compositionally biased toward basic and acidic residues; that stretch reads PGEKRKMTDSHV. An N-acetyltransferase domain is found at 503 to 651; sequence LNQKPNKKIL…GATLMGCELN (149 aa). The active-site Proton donor/acceptor is glutamate 570. Acetyl-CoA contacts are provided by residues 574–576, 581–587, and 612–615; these read CAV, QVKGYGT, and YAIG. Positions 706-725 are disordered; the sequence is IRETGWKPSGKEKSKEPRDP. Basic and acidic residues predominate over residues 714-725; it reads SGKEKSKEPRDP. The Bromo domain maps to 723 to 827; it reads RDPDQLYSTL…KFFFSKIKEA (105 aa).

It belongs to the acetyltransferase family. GCN5 subfamily. As to quaternary structure, interacts with SIRT1. Interacts (unsumoylated form) with NR2C1; the interaction promotes transactivation activity. Interacts with EP300, CREBBP and DDX17. Interacts with NCOA1 and NCOA3. Component of a large chromatin remodeling complex, at least composed of MYSM1, KAT2B/PCAF, RBM10 and KIF11/TRIP5. Interacts with NR2C2 (hypophosphorylated and unsumoylated form); the interaction promotes the transactivation activity of NR2C2. Interacts with KLF1; the interaction does not acetylate KLF1 and there is no enhancement of its transactivational activity. Interacts with NFE4. Interacts with MECOM. Interacts with E2F1; the interaction acetylates E2F1 augmenting its DNA-binding and transcriptional activity. Interacts with NPAS2, BMAL1 and CLOCK. Interacts with BCAS3. Interacts with CEBPB. Interacts with NR4A3. Interacts with NFATC2. Interacts with TBX5. Interacts with PLK4. Interacts with RB1; this interaction leads to RB1 acetylation. Interacts with VRK1. In terms of assembly, (Microbial infection) Interacts with and acetylates HIV-1 Tat. (Microbial infection) Interacts with HTLV-1 Tax. In terms of tissue distribution, ubiquitously expressed but most abundant in heart and skeletal muscle. Also expressed in the skin, in keratinocytes (at protein level).

It localises to the nucleus. The protein resides in the cytoplasm. Its subcellular location is the cytoskeleton. It is found in the microtubule organizing center. The protein localises to the centrosome. It catalyses the reaction L-lysyl-[histone] + acetyl-CoA = N(6)-acetyl-L-lysyl-[histone] + CoA + H(+). The enzyme catalyses L-lysyl-[protein] + acetyl-CoA = N(6)-acetyl-L-lysyl-[protein] + CoA + H(+). It carries out the reaction spermidine + acetyl-CoA = N(8)-acetylspermidine + CoA + H(+). With respect to regulation, activated in vitro by very low concentrations of spermidine, but inhibited at spermidine concentrations higher than 4 uM. The activating effect of low spermidine concentrations may be mediated by N(8)-acetylspermidine produced by KAT2B/P/CAF itself acting as a positive feedback loop. Its function is as follows. Functions as a histone acetyltransferase (HAT) to promote transcriptional activation. Has significant histone acetyltransferase activity with core histones (H3 and H4), and also with nucleosome core particles. Has a a strong preference for acetylation of H3 at 'Lys-9' (H3K9ac). Also acetylates non-histone proteins, such as ACLY, MAPRE1/EB1, PLK4, RRP9/U3-55K and TBX5. Inhibits cell-cycle progression and counteracts the mitogenic activity of the adenoviral oncoprotein E1A. Acts as a circadian transcriptional coactivator which enhances the activity of the circadian transcriptional activators: NPAS2-BMAL1 and CLOCK-BMAL1 heterodimers. Involved in heart and limb development by mediating acetylation of TBX5, acetylation regulating nucleocytoplasmic shuttling of TBX5. Acts as a negative regulator of centrosome amplification by mediating acetylation of PLK4. Acetylates RRP9/U3-55K, a core subunit of the U3 snoRNP complex, impairing pre-rRNA processing. Acetylates MAPRE1/EB1, promoting dynamic kinetochore-microtubule interactions in early mitosis. Also acetylates spermidine. (Microbial infection) In case of HIV-1 infection, it is recruited by the viral protein Tat. Regulates Tat's transactivating activity and may help inducing chromatin remodeling of proviral genes. This is Histone acetyltransferase KAT2B from Homo sapiens (Human).